The chain runs to 608 residues: UvrABC system protein C (608 aa).

The GIY-YIG domain maps to 15-93; that stretch reads HQPGVYRMYN…IKQYLPKYNV (79 aa). Residues 203 to 238 form the UVR domain; the sequence is RQVIQTLVKQMESASQSLNFEKAAIIRDQIQAMRRV.

It belongs to the UvrC family. Interacts with UvrB in an incision complex.

The protein localises to the cytoplasm. The UvrABC repair system catalyzes the recognition and processing of DNA lesions. UvrC both incises the 5' and 3' sides of the lesion. The N-terminal half is responsible for the 3' incision and the C-terminal half is responsible for the 5' incision. The polypeptide is UvrABC system protein C (Aliivibrio fischeri (strain ATCC 700601 / ES114) (Vibrio fischeri)).